We begin with the raw amino-acid sequence, 164 residues long: Protein SprT (164 aa).

The 143-residue stretch at 14–156 (QQAETFFKRP…LCKRCRETLV (143 aa)) folds into the SprT-like domain. His69 contacts Zn(2+). Glu70 is an active-site residue. His73 lines the Zn(2+) pocket.

Belongs to the SprT family. Zn(2+) serves as cofactor.

It localises to the cytoplasm. The polypeptide is Protein SprT (Pseudomonas putida (strain W619)).